The chain runs to 652 residues: Spermatogenesis-associated protein 13 (652 aa).

Residues 1–24 form a disordered region; sequence MTSASPEDQNAPVGCPKGARRRRP. Serine 78 carries the phosphoserine modification. Residues 81-108 are disordered; that stretch reads IGLDRVGRRRQMRASNVSSDGGTEPSAL. The segment at 98–150 is ABR (APC-binding region) domain; the sequence is SSDGGTEPSALVDDNGSEEDFSYEDLCQASPRYLQPGGEQLAINELISDGNVV. The residue at position 114 (serine 114) is a Phosphoserine. The region spanning 147–206 is the SH3 domain; it reads GNVVCAEALWDHVTMDDQELGFKAGDVIQVLEASNKDWWWGRSEDKEAWFPASFVRLRVN. Residues 209 to 235 are disordered; sequence ELSENSSSTPSEEQDEEASQSRHRHCE. One can recognise a DH domain in the interval 240–424; sequence MRTNVIREIM…KNVACLINER (185 aa). Positions 455-561 constitute a PH domain; it reads ELIHSGELTK…WLQACADERR (107 aa). Residues 561 to 652 form a C-terminal tail region; the sequence is RRVQEDKEMG…TFNRLTPFRK (92 aa).

Interacts (via ABR and SH3 domain) with APC. The binding of APC enhances its GEF activity by relieving it from an autoinhibitory conformation, in which the ABR and SH3 domains are associated with the C-terminal tail. Interacts (via C-terminal tail) with PPP1R9B (via C-terminus). Interacts with RAC1. In terms of tissue distribution, expressed at high levels in the placenta, spleen and kidney, at moderate levels in lung, small intestine, liver, brain and heart, and at low levels in skeletal muscle. Expression is aberrantly enhanced in most colorectal tumors.

The protein resides in the cytoplasm. Its subcellular location is the cell projection. The protein localises to the filopodium. It is found in the lamellipodium. It localises to the ruffle membrane. The protein resides in the podosome. Both the ABR and the SH3 domains contribute to maintaining the protein in an inhibited conformation by associating with the C-terminal tail. Binding of these domains to the C-terminal tail inhibits the activity of the protein by blocking a region that is required for its GEF activity. Acts as a guanine nucleotide exchange factor (GEF) for RHOA, RAC1 and CDC42 GTPases. Regulates cell migration and adhesion assembly and disassembly through a RAC1, PI3K, RHOA and AKT1-dependent mechanism. Increases both RAC1 and CDC42 activity, but decreases the amount of active RHOA. Required for MMP9 up-regulation via the JNK signaling pathway in colorectal tumor cells. Involved in tumor angiogenesis and may play a role in intestinal adenoma formation and tumor progression. This Homo sapiens (Human) protein is Spermatogenesis-associated protein 13.